The following is a 129-amino-acid chain: UPF0212 protein MM_2357 (129 aa).

This sequence belongs to the UPF0212 family.

The chain is UPF0212 protein MM_2357 from Methanosarcina mazei (strain ATCC BAA-159 / DSM 3647 / Goe1 / Go1 / JCM 11833 / OCM 88) (Methanosarcina frisia).